The primary structure comprises 348 residues: Isopentenyl-diphosphate delta-isomerase (348 aa).

5-6 (RK) is a binding site for substrate. FMN is bound by residues serine 61, 62-64 (SMT), serine 92, and asparagine 120. 92–94 (SMR) provides a ligand contact to substrate. Position 159 (glutamine 159) interacts with substrate. Glutamate 160 is a Mg(2+) binding site. FMN-binding positions include lysine 189, serine 214, threonine 219, 269 to 271 (GLR), and 290 to 291 (AR).

Belongs to the IPP isomerase type 2 family. As to quaternary structure, homooctamer. Dimer of tetramers. FMN serves as cofactor. NADPH is required as a cofactor. Requires Mg(2+) as cofactor.

It localises to the cytoplasm. The catalysed reaction is isopentenyl diphosphate = dimethylallyl diphosphate. Its function is as follows. Involved in the biosynthesis of isoprenoids. Catalyzes the 1,3-allylic rearrangement of the homoallylic substrate isopentenyl (IPP) to its allylic isomer, dimethylallyl diphosphate (DMAPP). The sequence is that of Isopentenyl-diphosphate delta-isomerase from Thermoplasma acidophilum (strain ATCC 25905 / DSM 1728 / JCM 9062 / NBRC 15155 / AMRC-C165).